A 281-amino-acid polypeptide reads, in one-letter code: Probable short-chain type dehydrogenase/reductase blr2146 (281 aa).

NAD(+) is bound at residue 10 to 34 (VVTGAGAGIGKACALAIAREGGRVV). Serine 146 serves as a coordination point for substrate. Catalysis depends on tyrosine 159, which acts as the Proton acceptor. The tract at residues 261-281 (GNSRAARPAGETAEADAAPRC) is disordered.

The protein belongs to the short-chain dehydrogenases/reductases (SDR) family.

The protein is Probable short-chain type dehydrogenase/reductase blr2146 of Bradyrhizobium diazoefficiens (strain JCM 10833 / BCRC 13528 / IAM 13628 / NBRC 14792 / USDA 110).